Reading from the N-terminus, the 641-residue chain is Bilirubin reductase (641 aa).

An FMN-binding site is contributed by Gln-96. Catalysis depends on Arg-167, which acts as the Proton donor. Residues Lys-214, Arg-295, and 317-318 each bind FMN; that span reads GR. Residues Cys-341, Cys-344, Cys-348, and Cys-360 each coordinate [4Fe-4S] cluster. 5 residues coordinate FAD: Ala-391, Glu-410, Gln-418, Lys-428, and Ala-455.

It in the N-terminal section; belongs to the NADH:flavin oxidoreductase/NADH oxidase family. FAD serves as cofactor. FMN is required as a cofactor. It depends on [4Fe-4S] cluster as a cofactor.

The enzyme catalyses urobilinogen + 4 A = (4Z,15Z)-bilirubin IXalpha + 4 AH2. It catalyses the reaction urobilinogen + 2 A = (4Z,15Z)-mesobilirubin IXalpha + 2 AH2. It functions in the pathway porphyrin-containing compound metabolism; protoheme degradation. Its function is as follows. Bilirubin reductase that catalyzes reduction of mesobilirubin and/or bilirubin to urobilinogen, a key step during heme degradation. Urobilinogen then spontaneously degrades into urobilin, which gives urine its distinctive yellow color. In Mediterraneibacter gnavus (strain CC55_001C), this protein is Bilirubin reductase.